A 75-amino-acid polypeptide reads, in one-letter code: Small ribosomal subunit protein bS18 (75 aa).

It belongs to the bacterial ribosomal protein bS18 family. Part of the 30S ribosomal subunit. Forms a tight heterodimer with protein bS6.

Its function is as follows. Binds as a heterodimer with protein bS6 to the central domain of the 16S rRNA, where it helps stabilize the platform of the 30S subunit. The sequence is that of Small ribosomal subunit protein bS18 from Chromobacterium violaceum (strain ATCC 12472 / DSM 30191 / JCM 1249 / CCUG 213 / NBRC 12614 / NCIMB 9131 / NCTC 9757 / MK).